The chain runs to 718 residues: Phenylalanine--tRNA ligase beta subunit (718 aa).

A tRNA-binding domain is found at 39–153 (LNEISGIKFG…IFDLESNPLK (115 aa)). Residues 386-460 (SKKTFLDLNY…RFYGLEKLKD (75 aa)) form the B5 domain. Residues D438, D444, and D448 each coordinate Mg(2+).

The protein belongs to the phenylalanyl-tRNA synthetase beta subunit family. Type 1 subfamily. Tetramer of two alpha and two beta subunits. Mg(2+) serves as cofactor.

The protein localises to the cytoplasm. The enzyme catalyses tRNA(Phe) + L-phenylalanine + ATP = L-phenylalanyl-tRNA(Phe) + AMP + diphosphate + H(+). The protein is Phenylalanine--tRNA ligase beta subunit of Mesomycoplasma hyopneumoniae (strain 7448) (Mycoplasma hyopneumoniae).